Here is a 603-residue protein sequence, read N- to C-terminus: Insulin-like growth factor-binding protein complex acid labile subunit (603 aa).

The N-terminal stretch at 1-23 is a signal peptide; it reads MALRTGSPALVVLLAFWVALGPC. The region spanning 32-74 is the LRRNT domain; the sequence is ASADAEGPQCPVTCTCSYDDYTDELSVFCSSRNLTQLPDGIPV. 2 disulfides stabilise this stretch: cysteine 41-cysteine 47 and cysteine 45-cysteine 60. Asparagine 64, asparagine 85, and asparagine 96 each carry an N-linked (GlcNAc...) asparagine glycan. LRR repeat units follow at residues 75–96, 99–120, 123–144, 147–168, 171–192, 195–216, 219–240, 243–264, 267–288, 291–312, 315–336, 339–360, 363–384, 387–408, 411–432, 435–456, 459–480, 483–504, and 507–528; these read STRALWLDGNNLSSIPSAAFQN, SLDFLNLQGSWLRSLEPQALLG, NLYHLHLERNLLRSLAAGLFRH, SLASLSLGNNLLGRLEEGLFRG, HLWDLNLGWNSLVVLPDTVFQG, NLHELVLAGNKLTYLQPALLCG, ELRELDLSRNALRSVKANVFIH, RLQKLYLDRNLITAVAPRAFLG, ALRWLDLSHNRVAGLLEDTFPG, GLHVLRLAHNAITSLRPRTFKD, FLEELQLGHNRIRQLGEKTFEG, QLEVLTLNDNQIHEVKVGAFFG, NVAVMNLSGNCLRSLPEHVFQG, RLHSLHLEHSCLGRIRLHTFAG, GLRRLFLRDNSISSIEEQSLAG, ELLELDLTANQLTHLPRQLFQG, QLEYLLLSNNQLTMLSEDVLGP, RAFWLDLSHNRLETPAEGLFSS, and RLRYLNLRNNSLQTFVPQPGLE. A glycan (N-linked (GlcNAc...) asparagine) is linked at asparagine 368. The N-linked (GlcNAc...) asparagine glycan is linked to asparagine 515. The region spanning 535–603 is the LRRCT domain; it reads NPWDCSCPLK…DISETLFVHC (69 aa). 3 cysteine pairs are disulfide-bonded: cysteine 539–cysteine 581, cysteine 541–cysteine 603, and cysteine 565–cysteine 570. Asparagine 578 and asparagine 586 each carry an N-linked (GlcNAc...) asparagine glycan.

Forms a ternary complex with IGF1 and IGFBP3.

It is found in the secreted. The protein localises to the extracellular space. May have an important role in regulating the access of circulating IGFs to the tissues. This chain is Insulin-like growth factor-binding protein complex acid labile subunit (Igfals), found in Mus musculus (Mouse).